A 236-amino-acid chain; its full sequence is MQSELQRGFVLHRRPYSETSLLVDLFTEESGRLTVIAKGARAKRSSWKSVLQPFTPLLLRWTGKSTLKTLTKAEPAAITLPLQQIALYSGFYVNELLTRVIESETPNPALFQHYLKCLTGLATETNVEPTLRLFEFQLLQMLGYGVDFLHCAGSGEPVDFSMTYRYREEKGFVASLVKDNLTFYGRDLLAFEALDFSDDAVRQAAKRFTRIALKPYLGDKPLKSRELFTQNILLLK.

It belongs to the RecO family.

Involved in DNA repair and RecF pathway recombination. This chain is DNA repair protein RecO, found in Haemophilus influenzae (strain 86-028NP).